The sequence spans 692 residues: MERPNSRLHCHPETHTYKCTVQPYFPLHTHATTVYGNVTKHRPSLGTLQAGDTLHARRFLSDKRRSYRNRSLGPTIASAPSVEQEDYRTPRPSFDSNGYVGKSFDFSSAQHGLTASESNALVKVSADFLRLNGSRQQFKNLLSARKKLGSLPPAYTRIDYSRESLDSHSARGIPNHHGPVITVEDTGSQLRINNIKPSVNQHLLESSCSFEKTMVTQCESNGSVTSHNTSSAFQRNNSRYGVPIDSTAVKQVYRVRSERLTNRVRITDRSLYLALFGVILMLVESEITAEKFYGVSKTHWISQSLRVGVTCSTIALLYHIILYHLNDIVLELVDCGADDWRVVVTTERVIQFCIEFICCGICPLPGSGEMKWTFIEPSLHKDGPSEERTVQTRNVDVPVDVILSCFMLCRSYLFARFMVLHSKQFQDASTRTLAALNRIQVNFSFVIKTSLDQQPVLFLTTFTFIFWIIMSWMFVQCERYGFSGKNPQSILYSNSLWFIAITFMLNGYGDIVPQTNAGRFIAIFVGVVGAVISSILIAVISRNILLSQGQRNVNNFMYDSKLAREHKEAAARVLQHTWHIHKCLQGSDGGNRRLRTYQRKFLKAIHKFRSVKSEMREFSENNSQNNPQMTRLVTDMHTSMQRLLNVQDEMRMQIEVLQQSVRNHYMHSTPNVPHLQGLTSSPVPSDRYDNRF.

The helical transmembrane segment at 270–290 threads the bilayer; the sequence is SLYLALFGVILMLVESEITAE. A helical membrane pass occupies residues 313-333; that stretch reads TIALLYHIILYHLNDIVLELV. The chain crosses the membrane as a helical span at residues 349–369; the sequence is VIQFCIEFICCGICPLPGSGE. Residues 401–421 form a helical membrane-spanning segment; that stretch reads VILSCFMLCRSYLFARFMVLH. The helical transmembrane segment at 455 to 475 threads the bilayer; sequence PVLFLTTFTFIFWIIMSWMFV. The pore-forming intramembrane region spans 492–512; that stretch reads YSNSLWFIAITFMLNGYGDIV. Residues 520 to 540 traverse the membrane as a helical segment; sequence FIAIFVGVVGAVISSILIAVI. A compositionally biased stretch (polar residues) spans 667–683; that stretch reads HSTPNVPHLQGLTSSPV. The interval 667 to 692 is disordered; the sequence is HSTPNVPHLQGLTSSPVPSDRYDNRF.

This sequence belongs to the potassium channel KCNN family. SK subfamily. As to quaternary structure, heterooligomer.

Its subcellular location is the membrane. Its function is as follows. Forms a voltage-independent potassium channel activated by intracellular calcium. The sequence is that of Small conductance calcium-activated potassium channel-like protein 3 (kcnl-3) from Caenorhabditis elegans.